Here is a 420-residue protein sequence, read N- to C-terminus: MASYTPSSSRPHTPLGLSPRGSYTNLASAAYDASSPGGHGAKDEKERLRAEREVQEALLKAQDGVEKAKKEEVCMPASTTVLPILSYCVASIMMTVVNKFVVSGRQFTMTFLLLAIQSFVCVACVWLAKRIGVINFRDWDMNDAKAWFPVSSLLVAVIYTGSKSLQFLSIPVYTIFKNLTIILIAYGEVIWFGGHVTPLTLCSFFLMVGSSVIAAWADISTTLSKLSAGVAVVDPISGADVPLSSISVMDTMNVGYLWMFINCLASAGYVLFMRKRIKVTGFKDWDSMFYNNLLSIPVLFVFSLIIEDWGAASFSRNFPEEGRAFLLSAIAFSGAAAVFISYSTAWCVRICGATTYSLVGALNKLPVAASGILFFGDPVNFGNVSAILVGGVSGIVYAVAKTNQAKVEKSKQARGGESKA.

The segment covering 1 to 11 (MASYTPSSSRP) has biased composition (polar residues). Residues 1 to 21 (MASYTPSSSRPHTPLGLSPRG) form a disordered region. The Cytoplasmic portion of the chain corresponds to 1–76 (MASYTPSSSR…KAKKEEVCMP (76 aa)). The helical transmembrane segment at 77-97 (ASTTVLPILSYCVASIMMTVV) threads the bilayer. Topologically, residues 98–106 (NKFVVSGRQ) are lumenal. A helical membrane pass occupies residues 107 to 127 (FTMTFLLLAIQSFVCVACVWL). Residues 128 to 145 (AKRIGVINFRDWDMNDAK) are Cytoplasmic-facing. A helical membrane pass occupies residues 146 to 168 (AWFPVSSLLVAVIYTGSKSLQFL). Over 169-171 (SIP) the chain is Lumenal. A helical transmembrane segment spans residues 172-194 (VYTIFKNLTIILIAYGEVIWFGG). Residues 195–200 (HVTPLT) lie on the Cytoplasmic side of the membrane. Residues 201 to 223 (LCSFFLMVGSSVIAAWADISTTL) traverse the membrane as a helical segment. Over 224 to 251 (SKLSAGVAVVDPISGADVPLSSISVMDT) the chain is Lumenal. Residues 252 to 272 (MNVGYLWMFINCLASAGYVLF) traverse the membrane as a helical segment. Residues 273 to 293 (MRKRIKVTGFKDWDSMFYNNL) lie on the Cytoplasmic side of the membrane. The chain crosses the membrane as a helical span at residues 294 to 314 (LSIPVLFVFSLIIEDWGAASF). Residues 315–323 (SRNFPEEGR) are Lumenal-facing. The chain crosses the membrane as a helical span at residues 324–344 (AFLLSAIAFSGAAAVFISYST). The Cytoplasmic segment spans residues 345 to 355 (AWCVRICGATT). Residues 356 to 376 (YSLVGALNKLPVAASGILFFG) traverse the membrane as a helical segment. Over 377–378 (DP) the chain is Lumenal. A helical transmembrane segment spans residues 379–399 (VNFGNVSAILVGGVSGIVYAV). Residues 400–420 (AKTNQAKVEKSKQARGGESKA) are Cytoplasmic-facing.

It belongs to the TPT transporter family. SLC35D subfamily. Homooligomer.

Its subcellular location is the golgi apparatus membrane. The protein localises to the cytoplasmic vesicle membrane. It localises to the endoplasmic reticulum membrane. Functionally, involved in the import of GDP-mannose from the cytoplasm into the Golgi lumen. In Cryptococcus neoformans var. neoformans serotype D (strain B-3501A) (Filobasidiella neoformans), this protein is GDP-mannose transporter 2 (GMT2).